A 553-amino-acid chain; its full sequence is Tether containing UBX domain for GLUT4 (553 aa).

Position 2 is an N-acetylalanine (Ala-2). Residues 182-202 (PGSLGSSASAGQAAASAPLPL) are compositionally biased toward low complexity. The tract at residues 182-324 (PGSLGSSASA…REPVDREPVV (143 aa)) is disordered. Ser-184 carries the post-translational modification Phosphoserine. Residues 206–217 (ELSRGDLSRPED) are compositionally biased toward basic and acidic residues. Residues 260–280 (RPLTSSSAKLPKSLSSPGGPS) are compositionally biased toward low complexity. Ser-275 carries the post-translational modification Phosphoserine. The segment covering 296–324 (EQERERDPQQEQERERPVDREPVDREPVV) has biased composition (basic and acidic residues). The interaction with GLUT4 stretch occupies residues 317–380 (PVDREPVVCH…LVTKAFREAQ (64 aa)). The region spanning 386 to 462 (ERYPKVALRV…NLFPAALVHL (77 aa)) is the UBX domain. Residues 499–536 (GSPSPLPAPDPAPKSEPAAEEGALVPPEPIPGTAQPVK) are disordered. Phosphoserine is present on residues Ser-500 and Ser-502. The span at 502-512 (SPLPAPDPAPK) shows a compositional bias: pro residues.

Interacts with GLUT4. Interacts with VCPKMT. Interacts with VCP. In terms of tissue distribution, ubiquitous. Highly expressed in testis, heart, skeletal muscle and pancreas.

The protein localises to the endomembrane system. It localises to the endoplasmic reticulum-Golgi intermediate compartment membrane. It is found in the cytoplasm. The protein resides in the nucleus. Tethering protein that sequesters GLUT4-containing vesicles in the cytoplasm in the absence of insulin. Modulates the amount of GLUT4 that is available at the cell surface. Enhances VCP methylation catalyzed by VCPKMT. The protein is Tether containing UBX domain for GLUT4 (ASPSCR1) of Homo sapiens (Human).